Here is a 347-residue protein sequence, read N- to C-terminus: Protein-glutamate methylesterase/protein-glutamine glutaminase 4 (347 aa).

The 119-residue stretch at 3 to 121 (KVLIVDDSAS…HPNHEREARS (119 aa)) folds into the Response regulatory domain. Aspartate 54 bears the 4-aspartylphosphate mark. Residues 157 to 342 (PARLKAVAIG…PDRIVTALTS (186 aa)) enclose the CheB-type methylesterase domain. Residues serine 168, histidine 195, and aspartate 289 contribute to the active site.

It belongs to the CheB family. Post-translationally, phosphorylated by CheA. Phosphorylation of the N-terminal regulatory domain activates the methylesterase activity.

The protein localises to the cytoplasm. The catalysed reaction is [protein]-L-glutamate 5-O-methyl ester + H2O = L-glutamyl-[protein] + methanol + H(+). The enzyme catalyses L-glutaminyl-[protein] + H2O = L-glutamyl-[protein] + NH4(+). Involved in chemotaxis. Part of a chemotaxis signal transduction system that modulates chemotaxis in response to various stimuli. Catalyzes the demethylation of specific methylglutamate residues introduced into the chemoreceptors (methyl-accepting chemotaxis proteins or MCP) by CheR. Also mediates the irreversible deamidation of specific glutamine residues to glutamic acid. The protein is Protein-glutamate methylesterase/protein-glutamine glutaminase 4 of Geobacter metallireducens (strain ATCC 53774 / DSM 7210 / GS-15).